The sequence spans 329 residues: uncharacterized protein (329 aa).

An SIS domain is found at 38–184; that stretch reads IVKLILKSQE…MACLMRAKNF (147 aa). 56-61 contributes to the ATP binding site; it reads GVGKSA. CBS domains are found at residues 211-267 and 276-329; these read QTTN…GLSL and TLKP…GLKA.

It belongs to the SIS family. GutQ/KpsF subfamily.

This is an uncharacterized protein from Helicobacter pylori (strain J99 / ATCC 700824) (Campylobacter pylori J99).